A 453-amino-acid chain; its full sequence is tRNA modification GTPase MnmE (453 aa).

The (6S)-5-formyl-5,6,7,8-tetrahydrofolate site is built by Arg-22, Glu-79, and Lys-119. The 162-residue stretch at 215 to 376 (GMKVVIAGRP…LRNHLKECMG (162 aa)) folds into the TrmE-type G domain. Asn-225 contributes to the K(+) binding site. GTP-binding positions include 225–230 (NAGKSS), 244–250 (TDIAGTT), 269–272 (DTAG), and 334–337 (NKAD). Ser-229 lines the Mg(2+) pocket. Residues Thr-244, Ile-246, and Thr-249 each coordinate K(+). Residue Thr-250 participates in Mg(2+) binding. Position 453 (Lys-453) interacts with (6S)-5-formyl-5,6,7,8-tetrahydrofolate.

This sequence belongs to the TRAFAC class TrmE-Era-EngA-EngB-Septin-like GTPase superfamily. TrmE GTPase family. As to quaternary structure, homodimer. Heterotetramer of two MnmE and two MnmG subunits. Requires K(+) as cofactor.

Its subcellular location is the cytoplasm. In terms of biological role, exhibits a very high intrinsic GTPase hydrolysis rate. Involved in the addition of a carboxymethylaminomethyl (cmnm) group at the wobble position (U34) of certain tRNAs, forming tRNA-cmnm(5)s(2)U34. The protein is tRNA modification GTPase MnmE of Vibrio vulnificus (strain CMCP6).